Consider the following 705-residue polypeptide: Putative membrane protein SCO0839 (705 aa).

A run of 12 helical transmembrane segments spans residues 16-36, 177-197, 202-222, 237-257, 281-301, 316-336, 373-393, 529-549, 554-574, 587-607, 627-647, and 648-668; these read WLVP…LGPY, GIDG…LLLV, LLPL…CAIV, VQGI…LLLT, SWGA…ALLL, IGIV…LVLL, IWAL…TLSS, LIVP…LRSL, LLVA…ALVF, VPLY…IFLM, LTAT…TFAA, and LGVI…FGVL.

It belongs to the resistance-nodulation-cell division (RND) (TC 2.A.6) family. MmpL subfamily.

The protein localises to the cell membrane. This chain is Putative membrane protein SCO0839, found in Streptomyces coelicolor (strain ATCC BAA-471 / A3(2) / M145).